The primary structure comprises 195 residues: Holliday junction branch migration complex subunit RuvA (195 aa).

The domain I stretch occupies residues 1-66 (MNYLVFKVIY…LIIKDLYGFR (66 aa)). The tract at residues 67-141 (TYNERLLFID…KYINKVSEKN (75 aa)) is domain II. A region of interest (flexible linker) is located at residue Asn141. Residues 141–195 (NPWAKELSIGLENLGYDKKDIEYAITKVKVDTQQNIDISEIIGCAIKEISLRHEN) are domain III.

It belongs to the RuvA family. In terms of assembly, homotetramer. Forms an RuvA(8)-RuvB(12)-Holliday junction (HJ) complex. HJ DNA is sandwiched between 2 RuvA tetramers; dsDNA enters through RuvA and exits via RuvB. An RuvB hexamer assembles on each DNA strand where it exits the tetramer. Each RuvB hexamer is contacted by two RuvA subunits (via domain III) on 2 adjacent RuvB subunits; this complex drives branch migration. In the full resolvosome a probable DNA-RuvA(4)-RuvB(12)-RuvC(2) complex forms which resolves the HJ.

The protein localises to the cytoplasm. In terms of biological role, the RuvA-RuvB-RuvC complex processes Holliday junction (HJ) DNA during genetic recombination and DNA repair, while the RuvA-RuvB complex plays an important role in the rescue of blocked DNA replication forks via replication fork reversal (RFR). RuvA specifically binds to HJ cruciform DNA, conferring on it an open structure. The RuvB hexamer acts as an ATP-dependent pump, pulling dsDNA into and through the RuvAB complex. HJ branch migration allows RuvC to scan DNA until it finds its consensus sequence, where it cleaves and resolves the cruciform DNA. The sequence is that of Holliday junction branch migration complex subunit RuvA from Ureaplasma urealyticum serovar 10 (strain ATCC 33699 / Western).